The chain runs to 413 residues: Arginine biosynthesis bifunctional protein ArgJ (413 aa).

Substrate is bound by residues threonine 154, lysine 180, threonine 191, glutamate 277, asparagine 408, and threonine 413. Residue threonine 191 is the Nucleophile of the active site.

Belongs to the ArgJ family. As to quaternary structure, heterotetramer of two alpha and two beta chains.

Its subcellular location is the cytoplasm. The catalysed reaction is N(2)-acetyl-L-ornithine + L-glutamate = N-acetyl-L-glutamate + L-ornithine. It carries out the reaction L-glutamate + acetyl-CoA = N-acetyl-L-glutamate + CoA + H(+). It participates in amino-acid biosynthesis; L-arginine biosynthesis; L-ornithine and N-acetyl-L-glutamate from L-glutamate and N(2)-acetyl-L-ornithine (cyclic): step 1/1. It functions in the pathway amino-acid biosynthesis; L-arginine biosynthesis; N(2)-acetyl-L-ornithine from L-glutamate: step 1/4. Its function is as follows. Catalyzes two activities which are involved in the cyclic version of arginine biosynthesis: the synthesis of N-acetylglutamate from glutamate and acetyl-CoA as the acetyl donor, and of ornithine by transacetylation between N(2)-acetylornithine and glutamate. This is Arginine biosynthesis bifunctional protein ArgJ from Synechocystis sp. (strain ATCC 27184 / PCC 6803 / Kazusa).